The following is a 382-amino-acid chain: Zinc metalloproteinase nas-7 (382 aa).

Positions 1–18 (MLLPWIITIVTVIPATLG) are cleaved as a signal peptide. Residues 19–79 (HRNRVQDDEM…DIRLPRRHKR (61 aa)) constitute a propeptide that is removed on maturation. Positions 80-273 (NGVSRAAKLW…SKINRMYNCP (194 aa)) constitute a Peptidase M12A domain. 5 cysteine pairs are disulfide-bonded: Cys122–Cys272, Cys144–Cys163, Cys348–Cys382, Cys355–Cys375, and Cys362–Cys379. His171 is a binding site for Zn(2+). Glu172 is an active-site residue. Residues His175 and His181 each contribute to the Zn(2+) site. Residues 348-382 (CEDRITVCWWTADRCRSPAIYQVMSSLCPKTCKFC) form the ShKT domain.

Requires Zn(2+) as cofactor. As to expression, expressed in the head of adult hermaphrodites but not within pharynx cells. Expressed in pharyngeal muscles, mc cells, intestine, hypodermal seam cells, arcade cells, spermatheca, vulva and rectal epithelial cells.

Its subcellular location is the secreted. Its function is as follows. Metalloprotease. The polypeptide is Zinc metalloproteinase nas-7 (nas-7) (Caenorhabditis elegans).